The primary structure comprises 257 residues: Imidazole glycerol phosphate synthase subunit HisF (257 aa).

Residues Asp-11 and Asp-130 contribute to the active site.

The protein belongs to the HisA/HisF family. As to quaternary structure, heterodimer of HisH and HisF.

Its subcellular location is the cytoplasm. The enzyme catalyses 5-[(5-phospho-1-deoxy-D-ribulos-1-ylimino)methylamino]-1-(5-phospho-beta-D-ribosyl)imidazole-4-carboxamide + L-glutamine = D-erythro-1-(imidazol-4-yl)glycerol 3-phosphate + 5-amino-1-(5-phospho-beta-D-ribosyl)imidazole-4-carboxamide + L-glutamate + H(+). It participates in amino-acid biosynthesis; L-histidine biosynthesis; L-histidine from 5-phospho-alpha-D-ribose 1-diphosphate: step 5/9. IGPS catalyzes the conversion of PRFAR and glutamine to IGP, AICAR and glutamate. The HisF subunit catalyzes the cyclization activity that produces IGP and AICAR from PRFAR using the ammonia provided by the HisH subunit. The polypeptide is Imidazole glycerol phosphate synthase subunit HisF (Shewanella sp. (strain W3-18-1)).